The chain runs to 504 residues: Cobyric acid synthase (504 aa).

The GATase cobBQ-type domain maps to 258–454; that stretch reads EIEIAIIKLP…LHGIFENDEW (197 aa). Cys-339 serves as the catalytic Nucleophile. Residue His-446 is part of the active site.

It belongs to the CobB/CobQ family. CobQ subfamily.

The protein operates within cofactor biosynthesis; adenosylcobalamin biosynthesis. Catalyzes amidations at positions B, D, E, and G on adenosylcobyrinic A,C-diamide. NH(2) groups are provided by glutamine, and one molecule of ATP is hydrogenolyzed for each amidation. The sequence is that of Cobyric acid synthase from Prochlorococcus marinus (strain NATL2A).